We begin with the raw amino-acid sequence, 412 residues long: Putative F-box protein At3g22940 (412 aa).

In terms of domain architecture, F-box spans 1–38; sequence MPLEEILSRLPLKSTRAVRSTCKKWDSLFKNRSFISKA.

The chain is Putative F-box protein At3g22940 from Arabidopsis thaliana (Mouse-ear cress).